A 176-amino-acid chain; its full sequence is Isopentenyl-diphosphate Delta-isomerase (176 aa).

Residues histidine 23 and histidine 29 each coordinate Mn(2+). The Nudix hydrolase domain maps to 27 to 161; the sequence is LRHLAISVFV…PERFTPWLKI (135 aa). The active site involves cysteine 63. A Mg(2+)-binding site is contributed by cysteine 63. Histidine 65 serves as a coordination point for Mn(2+). Glutamate 83 is a binding site for Mg(2+). Residues glutamate 109 and glutamate 111 each contribute to the Mn(2+) site. Glutamate 111 is a catalytic residue.

The protein belongs to the IPP isomerase type 1 family. Requires Mg(2+) as cofactor. It depends on Mn(2+) as a cofactor.

Its subcellular location is the cytoplasm. It catalyses the reaction isopentenyl diphosphate = dimethylallyl diphosphate. It functions in the pathway isoprenoid biosynthesis; dimethylallyl diphosphate biosynthesis; dimethylallyl diphosphate from isopentenyl diphosphate: step 1/1. The protein operates within porphyrin-containing compound metabolism; chlorophyll biosynthesis. Catalyzes the 1,3-allylic rearrangement of the homoallylic substrate isopentenyl (IPP) to its highly electrophilic allylic isomer, dimethylallyl diphosphate (DMAPP). This Rhodobacter capsulatus (strain ATCC BAA-309 / NBRC 16581 / SB1003) protein is Isopentenyl-diphosphate Delta-isomerase.